A 409-amino-acid polypeptide reads, in one-letter code: Failed axon connections homolog (409 aa).

A helical membrane pass occupies residues 68–88 (YLTGGALLAAAAYLLHELLVI). Positions 372–393 (DEGAENSFSRTPDTDFTGHSLF) are disordered.

This sequence belongs to the FAX family.

The protein localises to the membrane. May play a role in axonal development. The polypeptide is Failed axon connections homolog (Faxc) (Mus musculus (Mouse)).